The chain runs to 273 residues: N-alpha-acetyltransferase 30 (273 aa).

Disordered regions lie at residues 1-39 (MADAPSGPSVLSHYPGAGLAGEQQREEERHKGCHHHQLN) and 62-85 (QKTRKDSGLVQPQGRTDTRAPNGL). Positions 125–273 (RYVRYESELQ…DALRLKLWLR (149 aa)) constitute an N-acetyltransferase domain.

It belongs to the acetyltransferase family. MAK3 subfamily. In terms of assembly, component of the N-terminal acetyltransferase C (NatC) complex.

The protein resides in the cytoplasm. Its subcellular location is the nucleus. The enzyme catalyses N-terminal L-methionyl-L-leucyl-[protein] + acetyl-CoA = N-terminal N(alpha)-acetyl-L-methionyl-L-leucyl-[protein] + CoA + H(+). The catalysed reaction is N-terminal L-methionyl-L-isoleucyl-[protein] + acetyl-CoA = N-terminal N(alpha)-acetyl-L-methionyl-L-isoleucyl-[protein] + CoA + H(+). It catalyses the reaction N-terminal L-methionyl-L-phenylalanyl-[protein] + acetyl-CoA = N-terminal N(alpha)-acetyl-L-methionyl-L-phenylalanyl-[protein] + CoA + H(+). It carries out the reaction N-terminal L-methionyl-L-tryptophyl-[protein] + acetyl-CoA = N-terminal N(alpha)-acetyl-L-methionyl-L-tryptophyl-[protein] + CoA + H(+). The enzyme catalyses N-terminal L-methionyl-L-tyrosyl-[protein] + acetyl-CoA = N-terminal N(alpha)-acetyl-L-methionyl-L-tyrosyl-[protein] + CoA + H(+). In terms of biological role, catalytic subunit of the N-terminal acetyltransferase C (NatC) complex. Catalyzes acetylation of the N-terminal methionine residues of peptides beginning with Met-Leu-Ala and Met-Leu-Gly. N-terminal acetylation protects proteins from ubiquitination and degradation by the N-end rule pathway. The protein is N-alpha-acetyltransferase 30 (naa30) of Xenopus laevis (African clawed frog).